Consider the following 249-residue polypeptide: Probable transcriptional regulatory protein ZMO0153 (249 aa).

This sequence belongs to the TACO1 family.

Its subcellular location is the cytoplasm. The protein is Probable transcriptional regulatory protein ZMO0153 of Zymomonas mobilis subsp. mobilis (strain ATCC 31821 / ZM4 / CP4).